A 189-amino-acid polypeptide reads, in one-letter code: Phomopsin biosynthesis cluster protein D (189 aa).

The protein belongs to the oryJ family.

Functionally, part of the gene cluster that mediates the biosynthesis of the phomopsins, a group of hexapeptide mycotoxins which infects lupins and causes lupinosis disease in livestock. The role of phomC within the phomopsins biosynthesis pathway has still to be determined. The pathway starts with the processing of the precursor phomA by several endopeptidases including kexin proteases as well as the cluster-specific S41 family peptidase phomP1 and the oligopeptidase phomG to produce 10 identical copies of the hexapeptide Tyr-Val-Ile-Pro-Ile-Asp. After being excised from the precursor peptide, the core peptides are cyclized and modified post-translationally by enzymes encoded within the gene cluster. The timing and order of proteolysis of the phomA precursor and PTMs are still unknown. Two tyrosinase-like enzymes, phomQ1 and phomQ2, catalyze the chlorination and hydroxylation of Tyr, respectively. PhomYb, is proposed to be involved in the construction of the macrocyclic structure. The other 4 ustYa family proteins may be involved in PTMs that generate the unique structure of phomopsin A. PhomYa is required for the hydroxylation of C-beta of Tyr. PhomYc, phomYd, and phomYe are responsible for the biosynthesis of 2,3-dehydroisoleucine (dIle), 2,3-dehydroaspartic acid (dAsp), and 3,4-dehydroproline (dPro), respectively. While dIle formation by phomYc is indispensable for the installation of dAsp by phomYd, the order of the other PTMs have not been elucidated yet. Most of the biosynthetic enzymes likely have broad substrate specificity, and thus, there might be a metabolic grid from a precursor to phomopsin A. The enzyme(s) responsible for the biosynthesis of 3,4-dehydrovaline (dVal) have also not been identified yet. Finally, phomM acts as an S-adenosylmethionine-dependent alpha-N-methyltransferase that catalyzes two successive N-methylation reactions, converting N-desmethyl-phomopsin A to phomopsin A and phomopsin A further to an N,N-dimethylated congener called phomopsin E. The polypeptide is Phomopsin biosynthesis cluster protein D (Diaporthe leptostromiformis (Lupinosis disease fungus)).